We begin with the raw amino-acid sequence, 238 residues long: Large ribosomal subunit protein uL2 (238 aa).

A disordered region spans residues 200–238 (HGGGLHQSVSRPSTVSRNAPPGRKVGHIAARRTGRKEGK). Residues 206 to 216 (QSVSRPSTVSR) are compositionally biased toward polar residues. The span at 223 to 238 (KVGHIAARRTGRKEGK) shows a compositional bias: basic residues.

The protein belongs to the universal ribosomal protein uL2 family. Part of the 50S ribosomal subunit. Forms a bridge to the 30S subunit in the 70S ribosome.

Functionally, one of the primary rRNA binding proteins. Required for association of the 30S and 50S subunits to form the 70S ribosome, for tRNA binding and peptide bond formation. It has been suggested to have peptidyltransferase activity; this is somewhat controversial. Makes several contacts with the 16S rRNA in the 70S ribosome. The sequence is that of Large ribosomal subunit protein uL2 from Saccharolobus islandicus (strain Y.N.15.51 / Yellowstone #2) (Sulfolobus islandicus).